Consider the following 286-residue polypeptide: MTEIQAVLDDPNEPRLITETGVAARVAAIASGVLGALGYRLVRVKVTNRDGGTLQIMAERPDGTMSIDDCEAASRALSPVLDVEDPISSAYRLEMSSPGIDRPLVRQSDFVRWAGHEVKVEMARPVDGRKRFRGILIGAEDGIAVVRRLDAPATEEPTVRLPVADIHDAKLMLTDALIREALRAAKAAGQAIDEEAEAFLDGEDGDDTGVDAGDPDQDDADDALAEATAQPAAPYKGPSRKDGGNKLVGRKAKGKKASPKKSNAKKKAGLETAASSANASTVKETH.

The span at 200-224 shows a compositional bias: acidic residues; the sequence is LDGEDGDDTGVDAGDPDQDDADDAL. The tract at residues 200–286 is disordered; it reads LDGEDGDDTG…ANASTVKETH (87 aa). A compositionally biased stretch (basic residues) spans 248–267; sequence VGRKAKGKKASPKKSNAKKK. Residues 273–286 show a composition bias toward polar residues; sequence AASSANASTVKETH.

The protein belongs to the RimP family.

The protein resides in the cytoplasm. Required for maturation of 30S ribosomal subunits. This chain is Ribosome maturation factor RimP, found in Xanthobacter autotrophicus (strain ATCC BAA-1158 / Py2).